A 606-amino-acid polypeptide reads, in one-letter code: Dihydroxy-acid dehydratase ilvC, mitochondrial (606 aa).

C84 contributes to the [2Fe-2S] cluster binding site. D116 lines the Mg(2+) pocket. C157 contacts [2Fe-2S] cluster. D158 contacts Mg(2+). A [2Fe-2S] cluster-binding site is contributed by C232. E485 provides a ligand contact to Mg(2+). S511 acts as the Proton acceptor in catalysis.

It belongs to the IlvD/Edd family. [2Fe-2S] cluster is required as a cofactor. It depends on Mg(2+) as a cofactor.

It localises to the mitochondrion. It carries out the reaction (2R)-2,3-dihydroxy-3-methylbutanoate = 3-methyl-2-oxobutanoate + H2O. The catalysed reaction is (2R,3R)-2,3-dihydroxy-3-methylpentanoate = (S)-3-methyl-2-oxopentanoate + H2O. Its pathway is amino-acid biosynthesis; L-isoleucine biosynthesis; L-isoleucine from 2-oxobutanoate: step 3/4. It participates in amino-acid biosynthesis; L-valine biosynthesis; L-valine from pyruvate: step 3/4. With respect to regulation, DHAD activity is inhibited in dose-dependent manner by 2-hydroxy-3-methylbutyric acid with an IC(50) of about 8 mM. In terms of biological role, dihydroxyacid dehydratase that catalyzes the third step in the common pathway leading to biosynthesis of branched-chain amino acids. Catalyzes the dehydration of (2R,3R)-2,3-dihydroxy-3-methylpentanoate (2,3-dihydroxy-3-methylvalerate) into 2-oxo-3-methylpentanoate (2-oxo-3-methylvalerate) and of (2R)-2,3-dihydroxy-3-methylbutanoate (2,3-dihydroxyisovalerate) into 2-oxo-3-methylbutanoate (2-oxoisovalerate), the penultimate precursor to L-isoleucine and L-valine, respectively. IlvC and the branched-chain amino acid biosynthesis are crucial for virulence and may be a potential target to develop antifungal agents. This Aspergillus fumigatus (strain ATCC MYA-4609 / CBS 101355 / FGSC A1100 / Af293) (Neosartorya fumigata) protein is Dihydroxy-acid dehydratase ilvC, mitochondrial.